The chain runs to 142 residues: Succinate dehydrogenase subunit 6, mitochondrial (142 aa).

Glycine 2 is modified (N-acetylglycine).

In terms of assembly, component of complex II composed of eight subunits in plants: four classical SDH subunits SDH1, SDH2, SDH3 and SDH4 (a flavoprotein (FP), an iron-sulfur protein (IP), and a cytochrome b composed of a large and a small subunit.), as well as four subunits unknown in mitochondria from bacteria and heterotrophic eukaryotes.

The protein localises to the mitochondrion inner membrane. The protein operates within carbohydrate metabolism; tricarboxylic acid cycle. This Arabidopsis thaliana (Mouse-ear cress) protein is Succinate dehydrogenase subunit 6, mitochondrial.